The primary structure comprises 508 residues: Phenylalanine--tRNA ligase alpha subunit (508 aa).

Ala-2 bears the N-acetylalanine mark. Residue Thr-190 is modified to Phosphothreonine. 2 positions are modified to phosphoserine: Ser-193 and Ser-301. An N6-acetyllysine modification is found at Lys-311. Residues Thr-329, 372–374 (QIE), and Tyr-412 each bind L-phenylalanine. Glu-414 is a binding site for Mg(2+). An L-phenylalanine-binding site is contributed by Phe-438.

It belongs to the class-II aminoacyl-tRNA synthetase family. Phe-tRNA synthetase alpha subunit type 2 subfamily. Heterotetramer; dimer of two heterodimers formed by FARSA and FARSB. It depends on Mg(2+) as a cofactor.

It is found in the cytoplasm. It carries out the reaction tRNA(Phe) + L-phenylalanine + ATP = L-phenylalanyl-tRNA(Phe) + AMP + diphosphate + H(+). The chain is Phenylalanine--tRNA ligase alpha subunit (FARSA) from Pongo abelii (Sumatran orangutan).